A 309-amino-acid chain; its full sequence is MEIQFLGTSAGQPSKSRNVSCIALKLLDELNEVWLFDVGEATQHQILKTNIRPRKVTRIFISHTHGDHIFGLPGFLSSRSFQGDGGPLTIYGPAGIEQFVQTSLRVSKTRVSYPIKYVVLKEDGLIFENDIFAVYTARLDHRVPSFGFRVVEKPRPGELLMDKVAEYNVPNGPLLGQLKAGKIITLSDGQKLDGRDFLGEERPGRIVTIIYDTRPTKNIGELADNADVLVHESTFDGGEEKMAHRYFHSTCLDAARVARDHNVGELYLTHISARYTGRAGRQLEHDARKIFKHTHLANDLDNFEITLRG.

Residues His-63, His-65, Asp-67, His-68, His-141, Asp-212, and His-270 each coordinate Zn(2+). Asp-67 (proton acceptor) is an active-site residue.

It belongs to the RNase Z family. As to quaternary structure, homodimer. Zn(2+) is required as a cofactor.

It carries out the reaction Endonucleolytic cleavage of RNA, removing extra 3' nucleotides from tRNA precursor, generating 3' termini of tRNAs. A 3'-hydroxy group is left at the tRNA terminus and a 5'-phosphoryl group is left at the trailer molecule.. Its function is as follows. Zinc phosphodiesterase, which displays some tRNA 3'-processing endonuclease activity. Probably involved in tRNA maturation, by removing a 3'-trailer from precursor tRNA. This Lactobacillus johnsonii (strain CNCM I-12250 / La1 / NCC 533) protein is Ribonuclease Z.